The following is a 276-amino-acid chain: MPDYAIGDVQGCYDPLQRLLELIDFNEKEDCLWFVGDLVNRGPDSLAVLRFIYSLPVKPKITLGNHDLHLLGLLFGGQPWKGHDDTLEEVMLADDGEELGHWLRKQSLLCRSSELNIVMCHAGIAPLWDLSKAVGLANELEAVLSGDSYHEFFAQMYGNKPDIWSDDLVGLDRLRVITNYFTRMRYCDAHGRLDLGYKGTLSKAPNHLYPWFEVPCRKEIEMDIVFGHWAALMGRSSHPRIHAIDTGCLWGGQLTALRLQDRQRFSVPGYGVSRFE.

Belongs to the Ap4A hydrolase family.

The catalysed reaction is P(1),P(4)-bis(5'-adenosyl) tetraphosphate + H2O = 2 ADP + 2 H(+). Its function is as follows. Hydrolyzes diadenosine 5',5'''-P1,P4-tetraphosphate to yield ADP. The chain is Bis(5'-nucleosyl)-tetraphosphatase, symmetrical from Legionella pneumophila (strain Corby).